The primary structure comprises 549 residues: Glucose-6-phosphate isomerase (549 aa).

Residue Glu-355 is the Proton donor of the active site. Catalysis depends on residues His-387 and Lys-515.

Belongs to the GPI family.

The protein localises to the cytoplasm. It carries out the reaction alpha-D-glucose 6-phosphate = beta-D-fructose 6-phosphate. It functions in the pathway carbohydrate biosynthesis; gluconeogenesis. The protein operates within carbohydrate degradation; glycolysis; D-glyceraldehyde 3-phosphate and glycerone phosphate from D-glucose: step 2/4. Its function is as follows. Catalyzes the reversible isomerization of glucose-6-phosphate to fructose-6-phosphate. The chain is Glucose-6-phosphate isomerase from Histophilus somni (strain 129Pt) (Haemophilus somnus).